The chain runs to 339 residues: Anthranilate phosphoribosyltransferase (339 aa).

5-phospho-alpha-D-ribose 1-diphosphate is bound by residues Gly81, 84–85, Ser89, 91–94, 109–117, and Ala121; these read GD, NVSS, and KHGNRALSS. Gly81 provides a ligand contact to anthranilate. Ser93 is a binding site for Mg(2+). Residue Asn112 participates in anthranilate binding. Arg167 is a binding site for anthranilate. Residues Asp225 and Glu226 each contribute to the Mg(2+) site.

This sequence belongs to the anthranilate phosphoribosyltransferase family. Homodimer. The cofactor is Mg(2+).

It catalyses the reaction N-(5-phospho-beta-D-ribosyl)anthranilate + diphosphate = 5-phospho-alpha-D-ribose 1-diphosphate + anthranilate. It functions in the pathway amino-acid biosynthesis; L-tryptophan biosynthesis; L-tryptophan from chorismate: step 2/5. Catalyzes the transfer of the phosphoribosyl group of 5-phosphorylribose-1-pyrophosphate (PRPP) to anthranilate to yield N-(5'-phosphoribosyl)-anthranilate (PRA). This Brucella canis (strain ATCC 23365 / NCTC 10854 / RM-666) protein is Anthranilate phosphoribosyltransferase.